A 270-amino-acid polypeptide reads, in one-letter code: Phospholysine phosphohistidine inorganic pyrophosphate phosphatase (270 aa).

Aspartate 14 and serine 16 together coordinate Mg(2+). Substrate-binding positions include 14–16 (DVS), 52–53 (TN), and lysine 187. Aspartate 212 is a Mg(2+) binding site.

It belongs to the HAD-like hydrolase superfamily. Mg(2+) is required as a cofactor.

The protein localises to the cytoplasm. Its subcellular location is the nucleus. It carries out the reaction diphosphate + H2O = 2 phosphate + H(+). Phosphatase that hydrolyzes imidodiphosphate, 3-phosphohistidine and 6-phospholysine. Has broad substrate specificity and can also hydrolyze inorganic diphosphate, but with lower efficiency. The protein is Phospholysine phosphohistidine inorganic pyrophosphate phosphatase (lhpp) of Xenopus laevis (African clawed frog).